The following is a 752-amino-acid chain: Iron-sulfur clusters transporter ABCB7, mitochondrial (752 aa).

The N-terminal 22 residues, 1-22 (MALLAMHSWRWAAAAAAFEKRR), are a transit peptide targeting the mitochondrion. Topologically, residues 23–140 (HSAILIRPLV…KDRPDLRARV (118 aa)) are mitochondrial matrix. The ABC transmembrane type-1 domain occupies 140–436 (VAISLGFLGG…LGTVYRETRQ (297 aa)). The helical transmembrane segment at 141 to 161 (AISLGFLGGAKAMNIVVPFMF) threads the bilayer. The Mitochondrial intermembrane segment spans residues 162 to 185 (KYAVDSLNQMSGNMLNLSDAPNTV). The chain crosses the membrane as a helical span at residues 186-206 (ATMATAVLIGYGVSRAGAAFF). At 207–259 (NEVRNAVFGKVAQNSIRRIAKNVFLHLHNLDLGFHLSRQTGALSKAIDRGTRG) the chain is on the mitochondrial matrix side. An N6-acetyllysine mark is found at Lys-216 and Lys-251. The helical transmembrane segment at 260–280 (ISFVLSALVFNLLPIMFEVML) threads the bilayer. The Mitochondrial intermembrane segment spans residues 281–290 (VSGVLYYKCG). The chain crosses the membrane as a helical span at residues 291–311 (AQFALVTLGTLGTYTAFTVAV). The Mitochondrial matrix portion of the chain corresponds to 312–382 (TRWRTRFRIE…TLAMLNFGQS (71 aa)). 315 to 319 (RTRFR) provides a ligand contact to glutathione. Ser-336 is subject to Phosphoserine. Phosphotyrosine is present on Tyr-340. At Thr-342 the chain carries Phosphothreonine. 378-381 (NFGQ) contributes to the glutathione binding site. The helical transmembrane segment at 383-403 (AIFSVGLTAIMVLASQGIVAG) threads the bilayer. Residues 404 to 409 (TLTVGD) are Mitochondrial intermembrane-facing. Residues 410 to 430 (LVMVNGLLFQLSLPLNFLGTV) traverse the membrane as a helical segment. Gly-428 lines the glutathione pocket. Over 431–752 (YRETRQALID…SVKGCGNCSC (322 aa)) the chain is Mitochondrial matrix. The region spanning 472-706 (VAFDNVHFEY…PHSIYSEMWH (235 aa)) is the ABC transporter domain. Residues Tyr-481 and 505–516 (GGSGSGKSTIVR) contribute to the ATP site.

It belongs to the ABC transporter superfamily. ABCB family. Heavy Metal importer (TC 3.A.1.210) subfamily. As to quaternary structure, homodimer or heterodimer. Interacts with C10orf88/PAAT. Forms a complex with ABCB10 and FECH, where a dimeric FECH bridges ABCB7 and ABCB10 homodimers; this complex may be required for cellular iron homeostasis, mitochondrial function and heme biosynthesis. Interacts with FECH. Interacts with ATP5F1A. Interacts with COX4I1; this interaction allows the regulation of cellular iron homeostasis and cellular reactive oxygen species (ROS) levels in cardiomyocytes.

It localises to the mitochondrion inner membrane. The enzyme catalyses (glutathione)4[2Fe(III)-2S] cluster(in) + ATP + H2O = (glutathione)4[2Fe(III)-2S] cluster(out) + ADP + phosphate + H(+). ATPase activity is stimulated by glutathione. Exports glutathione-coordinated iron-sulfur clusters such as [2Fe-2S]-(GS)4 cluster from the mitochondria to the cytosol in an ATP-dependent manner allowing the assembly of the cytosolic iron-sulfur (Fe/S) cluster-containing proteins and participates in iron homeostasis. Moreover, through a functional complex formed of ABCB7, FECH and ABCB10, also plays a role in the cellular iron homeostasis, mitochondrial function and heme biosynthesis. In cardiomyocytes, regulates cellular iron homeostasis and cellular reactive oxygen species (ROS) levels through its interaction with COX4I1. May also play a role in hematopoiesis. This Homo sapiens (Human) protein is Iron-sulfur clusters transporter ABCB7, mitochondrial.